The sequence spans 143 residues: MNCFSFSFIIIVLCAGSSNAKFREKNSVVFKNSLGVKNVLKIHCTSKDDDLGYHYLRPGVQIYEFRFHDSVLKTKFDCELWQGRGPTYKFYANFRAYKSGGLIAHYGKKNIWEAREDGIYFTHGKEIPKLEYKWSPIGKPPSP.

Residues 1–20 (MNCFSFSFIIIVLCAGSSNA) form the signal peptide.

It belongs to the plant self-incompatibility (S1) protein family.

The protein resides in the secreted. The protein is S-protein homolog 11 of Arabidopsis thaliana (Mouse-ear cress).